Consider the following 291-residue polypeptide: MFKGAIVAIVTPFKNGEIDEPALRDLIEFQIENGTDGIVPCGTTGESATLSHEEHDRVIEITIDAVRKRVPVIAGTGSNSTVEAMRLTKHAHEAGADGVLVVAPYYNRPTQEGLYQHYKALAESVPIPIIPYNIPSRTGVNILPETVARLAKISNIVGIKEASGSLKQMNDVIRLCDDGFSVLSGDDFFTLPLLTLGGKGVISVISNVAPADMACLVDAFEAGNMKKARAMHDKMVPLVDALFIETNPTPVKAALALMGKISEDVRLPLYRMTETSREKLKRVMQNYGLIG.

Position 44 (Thr-44) interacts with pyruvate. The active-site Proton donor/acceptor is the Tyr-132. Lys-160 serves as the catalytic Schiff-base intermediate with substrate. Ile-202 contributes to the pyruvate binding site.

Belongs to the DapA family. As to quaternary structure, homotetramer; dimer of dimers.

The protein localises to the cytoplasm. It carries out the reaction L-aspartate 4-semialdehyde + pyruvate = (2S,4S)-4-hydroxy-2,3,4,5-tetrahydrodipicolinate + H2O + H(+). It functions in the pathway amino-acid biosynthesis; L-lysine biosynthesis via DAP pathway; (S)-tetrahydrodipicolinate from L-aspartate: step 3/4. Catalyzes the condensation of (S)-aspartate-beta-semialdehyde [(S)-ASA] and pyruvate to 4-hydroxy-tetrahydrodipicolinate (HTPA). This is 4-hydroxy-tetrahydrodipicolinate synthase from Syntrophus aciditrophicus (strain SB).